The chain runs to 115 residues: MSAQGHRLTAPVNSEKVYIVLGLSFALVSITFLLSRNSLPHVGDNIHSLPHGGAYRDGTKAILYNSPNLGSRVSLHNGKNAAFAAVLLLTLLIYGSKYISQRNHTCACGNNHSSH.

The Cytoplasmic segment spans residues 1–13; it reads MSAQGHRLTAPVN. Residues 14–34 traverse the membrane as a helical segment; it reads SEKVYIVLGLSFALVSITFLL. Residues 35–74 are Lumenal-facing; the sequence is SRNSLPHVGDNIHSLPHGGAYRDGTKAILYNSPNLGSRVS. A helical transmembrane segment spans residues 75 to 95; the sequence is LHNGKNAAFAAVLLLTLLIYG. The Cytoplasmic segment spans residues 96 to 115; that stretch reads SKYISQRNHTCACGNNHSSH.

It belongs to the Tymovirales TGBp2 protein family.

Its subcellular location is the host endoplasmic reticulum membrane. Plays a role in viral cell-to-cell propagation, by facilitating genome transport to neighboring plant cells through plasmosdesmata,. The sequence is that of Movement protein TGB2 from Potato virus X (PVX).